Here is a 100-residue protein sequence, read N- to C-terminus: Urease subunit gamma (100 aa).

Belongs to the urease gamma subunit family. In terms of assembly, heterotrimer of UreA (gamma), UreB (beta) and UreC (alpha) subunits. Three heterotrimers associate to form the active enzyme.

It is found in the cytoplasm. The enzyme catalyses urea + 2 H2O + H(+) = hydrogencarbonate + 2 NH4(+). It functions in the pathway nitrogen metabolism; urea degradation; CO(2) and NH(3) from urea (urease route): step 1/1. The polypeptide is Urease subunit gamma (Yersinia rohdei).